A 169-amino-acid polypeptide reads, in one-letter code: Actin-related protein 2/3 complex subunit 4 (169 aa).

The protein belongs to the ARPC4 family. Component of the Arp2/3 complex composed of arpB/Arp2, arpC/Arp3, arcA/p41-arc, arcB/p34-arc, arcC/p21-arc, arcD/p20-arc and arcE/p16-arc. Interacts with carmil (via the region between the LRR domain and COOH-terminal proline-rich domain); carmil is required for Arp2/3-dependent actin nucleation. Arp2/3 complex, MyoB, MyoC, and the alpha and beta subunits of capping protein all form a larger complex with carmil.

Its subcellular location is the cytoplasm. The protein localises to the cytoskeleton. It is found in the cytosol. The protein resides in the cell cortex. It localises to the cell projection. Its subcellular location is the pseudopodium. Functionally, functions as a component of the Arp2/3 complex which is involved in regulation of actin polymerization and together with an activating nucleation-promoting factor (NPF) mediates the formation of branched actin networks. Seems to contact the pointed end of the daughter actin filament. The Arp2/3 complex is involved in organizing the actin system in cell motility and chemotaxis, in phagocytosis and macropinocytosis, at late steps of endosome processing, and in mitosis. In concert with a group of other proteins, the Arp2/3 complex plays a general role in the rapid activation and adaptation of the actin system to its multiple functions. The polypeptide is Actin-related protein 2/3 complex subunit 4 (arcD) (Dictyostelium discoideum (Social amoeba)).